Reading from the N-terminus, the 132-residue chain is UPF0299 membrane protein YohJ (132 aa).

The next 4 helical transmembrane spans lie at 7-27, 31-51, 63-83, and 93-113; these read IIWQYLRAFVLIYACLYAGIF, LLPVTIPGSIIGMLILFVLLA, GCYVLIRYMALLFVPIGVGVM, and FGPVVVSCAISTLVVFLVMSW.

It belongs to the UPF0299 family.

It localises to the cell inner membrane. The sequence is that of UPF0299 membrane protein YohJ from Shigella dysenteriae serotype 1 (strain Sd197).